The primary structure comprises 425 residues: GTPase Obg (425 aa).

The region spanning 1-158 (MFVDVARIYV…RWLLLELKVV (158 aa)) is the Obg domain. One can recognise an OBG-type G domain in the interval 159–330 (ADVGLVGFPN…LLEAAYDLIR (172 aa)). Residues 165–172 (GFPNAGKS), 190–194 (FTTLT), 212–215 (DIPG), 282–285 (NKMD), and 311–313 (SGA) each bind GTP. Residues S172 and T192 each coordinate Mg(2+). In terms of domain architecture, OCT spans 345 to 422 (VYRPKEEGWR…VCDIEFELMA (78 aa)).

It belongs to the TRAFAC class OBG-HflX-like GTPase superfamily. OBG GTPase family. Monomer. It depends on Mg(2+) as a cofactor.

It localises to the cytoplasm. In terms of biological role, an essential GTPase which binds GTP, GDP and possibly (p)ppGpp with moderate affinity, with high nucleotide exchange rates and a fairly low GTP hydrolysis rate. Plays a role in control of the cell cycle, stress response, ribosome biogenesis and in those bacteria that undergo differentiation, in morphogenesis control. This is GTPase Obg from Symbiobacterium thermophilum (strain DSM 24528 / JCM 14929 / IAM 14863 / T).